The following is a 557-amino-acid chain: uncharacterized protein (557 aa).

Residues 2–45 are a coiled coil; that stretch reads NEDETSILNKKMEKIEVEMAEFERLGAEREKEAVERIVQEENQN. Disordered stretches follow at residues 39–62, 101–127, 356–402, and 536–557; these read VQEENQNPEVPSNDDASTDIKSRK, NRTYYKNSQGYRRKPKRDDYNNNRKNF, PSPS…YPSN, and ANATSQPLSNLDTGGSAPYDHI. Polar residues-rich tracts occupy residues 101 to 110, 358 to 380, 390 to 400, and 536 to 548; these read NRTYYKNSQG, PSFQEEFPSTSKSPSATPGSSNA, DSATYPTSIYP, and ANATSQPLSNLDT.

It localises to the cytoplasm. Its subcellular location is the nucleus. This is an uncharacterized protein from Schizosaccharomyces pombe (strain 972 / ATCC 24843) (Fission yeast).